We begin with the raw amino-acid sequence, 153 residues long: Large ribosomal subunit protein uL13 (153 aa).

The disordered stretch occupies residues 128–153; sequence SEHPHEAQSPEVLDVTSMNSKNTRSA. Residues 143–153 are compositionally biased toward polar residues; it reads TSMNSKNTRSA.

The protein belongs to the universal ribosomal protein uL13 family. As to quaternary structure, part of the 50S ribosomal subunit.

This protein is one of the early assembly proteins of the 50S ribosomal subunit, although it is not seen to bind rRNA by itself. It is important during the early stages of 50S assembly. This is Large ribosomal subunit protein uL13 from Roseobacter denitrificans (strain ATCC 33942 / OCh 114) (Erythrobacter sp. (strain OCh 114)).